A 515-amino-acid chain; its full sequence is 2,3-bisphosphoglycerate-independent phosphoglycerate mutase (515 aa).

Mn(2+)-binding residues include Asp-14 and Ser-64. Ser-64 (phosphoserine intermediate) is an active-site residue. Residues His-125, 155-156 (RD), Arg-187, Arg-193, 263-266 (RADR), and Lys-337 each bind substrate. Residues Asp-404, His-408, Asp-445, His-446, and His-464 each contribute to the Mn(2+) site.

The protein belongs to the BPG-independent phosphoglycerate mutase family. As to quaternary structure, monomer. The cofactor is Mn(2+).

The enzyme catalyses (2R)-2-phosphoglycerate = (2R)-3-phosphoglycerate. It participates in carbohydrate degradation; glycolysis; pyruvate from D-glyceraldehyde 3-phosphate: step 3/5. In terms of biological role, catalyzes the interconversion of 2-phosphoglycerate and 3-phosphoglycerate. This is 2,3-bisphosphoglycerate-independent phosphoglycerate mutase from Cronobacter sakazakii (strain ATCC BAA-894) (Enterobacter sakazakii).